A 274-amino-acid chain; its full sequence is Ciliary microtubule inner protein 2B (274 aa).

Disordered stretches follow at residues 46–89 (SPGL…SSMV) and 119–171 (TQRN…MDDR). Basic and acidic residues predominate over residues 130–155 (LPKEAKGEKDVEKDQEPKPEVEKEPE).

This sequence belongs to the CIMIP2 family. Microtubule inner protein component of sperm flagellar doublet microtubules. Expressed in trachea multiciliated cells.

Its subcellular location is the cytoplasm. It is found in the cytoskeleton. It localises to the cilium axoneme. The protein localises to the flagellum axoneme. Microtubule inner protein (MIP) part of the dynein-decorated doublet microtubules (DMTs) in cilia axoneme, which is required for motile cilia beating. In Bos taurus (Bovine), this protein is Ciliary microtubule inner protein 2B (CIMIP2B).